A 375-amino-acid chain; its full sequence is Growth/differentiation factor 8 (375 aa).

Positions 1–18 (MQKLQIFVYIYLFVLIVA) are cleaved as a signal peptide. Residues 19–266 (GPVDLNENSE…VTDTPKRSRR (248 aa)) constitute a propeptide that is removed on maturation. N-linked (GlcNAc...) asparagine glycosylation is found at asparagine 48 and asparagine 71. Cystine bridges form between cysteine 272/cysteine 282, cysteine 281/cysteine 340, cysteine 309/cysteine 372, and cysteine 313/cysteine 374.

The protein belongs to the TGF-beta family. In terms of assembly, homodimer; disulfide-linked. Interacts with WFIKKN2, leading to inhibit its activity. Interacts with FSTL3. Post-translationally, synthesized as large precursor molecule that undergoes proteolytic cleavage to generate an N-terminal propeptide and a disulfide linked C-terminal dimer, which is the biologically active molecule. The circulating form consists of a latent complex of the C-terminal dimer and other proteins, including its propeptide, which maintain the C-terminal dimer in a latent, inactive state. Ligand activation requires additional cleavage of the prodomain by a tolloid-like metalloproteinase.

The protein resides in the secreted. In terms of biological role, acts specifically as a negative regulator of skeletal muscle growth. The sequence is that of Growth/differentiation factor 8 (MSTN) from Aepyceros melampus (Impala).